Consider the following 55-residue polypeptide: ATP synthase F(0) complex subunit 8 (55 aa).

The helical transmembrane segment at 4–24 (LNPSPWLLILLFSWLIFLTML) threads the bilayer. Positions 36–55 (MPSTQNMCKQEPEPWTWPWA) are disordered.

This sequence belongs to the ATPase protein 8 family. As to quaternary structure, component of the ATP synthase complex composed at least of ATP5F1A/subunit alpha, ATP5F1B/subunit beta, ATP5MC1/subunit c (homooctomer), MT-ATP6/subunit a, MT-ATP8/subunit 8, ATP5ME/subunit e, ATP5MF/subunit f, ATP5MG/subunit g, ATP5MK/subunit k, ATP5MJ/subunit j, ATP5F1C/subunit gamma, ATP5F1D/subunit delta, ATP5F1E/subunit epsilon, ATP5PF/subunit F6, ATP5PB/subunit b, ATP5PD/subunit d, ATP5PO/subunit OSCP. ATP synthase complex consists of a soluble F(1) head domain (subunits alpha(3) and beta(3)) - the catalytic core - and a membrane F(0) domain - the membrane proton channel (subunits c, a, 8, e, f, g, k and j). These two domains are linked by a central stalk (subunits gamma, delta, and epsilon) rotating inside the F1 region and a stationary peripheral stalk (subunits F6, b, d, and OSCP).

The protein localises to the mitochondrion membrane. Functionally, subunit 8, of the mitochondrial membrane ATP synthase complex (F(1)F(0) ATP synthase or Complex V) that produces ATP from ADP in the presence of a proton gradient across the membrane which is generated by electron transport complexes of the respiratory chain. ATP synthase complex consist of a soluble F(1) head domain - the catalytic core - and a membrane F(1) domain - the membrane proton channel. These two domains are linked by a central stalk rotating inside the F(1) region and a stationary peripheral stalk. During catalysis, ATP synthesis in the catalytic domain of F(1) is coupled via a rotary mechanism of the central stalk subunits to proton translocation. In vivo, can only synthesize ATP although its ATP hydrolase activity can be activated artificially in vitro. Part of the complex F(0) domain. In Latimeria chalumnae (Coelacanth), this protein is ATP synthase F(0) complex subunit 8.